The sequence spans 215 residues: N-(5'-phosphoribosyl)anthranilate isomerase (215 aa).

It belongs to the TrpF family.

The catalysed reaction is N-(5-phospho-beta-D-ribosyl)anthranilate = 1-(2-carboxyphenylamino)-1-deoxy-D-ribulose 5-phosphate. It participates in amino-acid biosynthesis; L-tryptophan biosynthesis; L-tryptophan from chorismate: step 3/5. In Aeropyrum pernix (strain ATCC 700893 / DSM 11879 / JCM 9820 / NBRC 100138 / K1), this protein is N-(5'-phosphoribosyl)anthranilate isomerase (trpF).